The sequence spans 340 residues: Aurora kinase A- and ninein-interacting protein (340 aa).

The interaction with AURKA stretch occupies residues 175–340 (QREAKRKGEG…DSEGNRVIRH (166 aa)). Basic and acidic residues predominate over residues 178–190 (AKRKGEGLRESKT). The interval 178–209 (AKRKGEGLRESKTDCPGMGSHIRPPGSKCHQP) is disordered. An interaction with RBBP8/CtIP region spans residues 266 to 340 (RDSWSQLFTE…DSEGNRVIRH (75 aa)). S277 is modified (phosphoserine). A disordered region spans residues 293–317 (DVTNARNQGSGQFPDSPQAQGQDGP). Residues 296–313 (NARNQGSGQFPDSPQAQG) are compositionally biased toward polar residues.

This sequence belongs to the AUNIP family. In terms of assembly, interacts (via C-terminus) with AURKA (via C-terminus). Interacts (via N-terminus) with NIN; this interaction blocks NIN phosphorylation by both AURKA and GSK3B. Identified in a complex with NIN and AURKA. Interacts with RBBP8/CtIP.

The protein resides in the nucleus. The protein localises to the chromosome. Its subcellular location is the cytoplasm. It localises to the cytoskeleton. It is found in the microtubule organizing center. The protein resides in the centrosome. The protein localises to the spindle pole. Functionally, DNA-binding protein that accumulates at DNA double-strand breaks (DSBs) following DNA damage and promotes DNA resection and homologous recombination. Serves as a sensor of DNA damage: binds DNA with a strong preference for DNA substrates that mimic structures generated at stalled replication forks, and anchors RBBP8/CtIP to DSB sites to promote DNA end resection and ensuing homologous recombination repair. Inhibits non-homologous end joining (NHEJ). Required for the dynamic movement of AURKA at the centrosomes and spindle apparatus during the cell cycle. This Mus musculus (Mouse) protein is Aurora kinase A- and ninein-interacting protein.